Reading from the N-terminus, the 927-residue chain is Small conductance calcium-activated potassium channel protein (927 aa).

The span at 1–31 (MSIQKLNDTTNSGYVSSEETDSLLVSSSNPS) shows a compositional bias: polar residues. Disordered regions lie at residues 1–131 (MSIQ…EDVE), 181–251 (LSLK…VKSA), and 296–336 (HLHQ…SSST). Positions 45-62 (SNSTNGPTTGASTSSSGS) are enriched in low complexity. Gly residues predominate over residues 63–77 (VSGGGGGSGSGGGSA). Composition is skewed to polar residues over residues 95–107 (TSTYLTSPQQSQH) and 200–214 (NLGTSSYQNLASSIP). Composition is skewed to low complexity over residues 219-232 (SRCRACRNCSRRAS) and 296-308 (HLHQQQLQQSQQQ). Over residues 314 to 336 (ITSSPTNGSRIIRQSSQPESSST) the composition is skewed to polar residues. A helical membrane pass occupies residues 489 to 509 (ALVMGMFGIIVMVIENELSSA). The helical transmembrane segment at 530-550 (TVILLGLIVAYHALEVQLFMI) threads the bilayer. A helical membrane pass occupies residues 569-589 (IGLELFICAIHPIPGEYYFQW). A helical membrane pass occupies residues 609-629 (VALSLPMFLRLYLICRVMLLH). Residues 658–678 (LMTICPGTVLLVFMVSLWIIA) traverse the membrane as a helical segment. Residues 696–716 (LLNSMWLTAITFLCVGYGDIV) constitute an intramembrane region (pore-forming). The helical transmembrane segment at 724 to 744 (GITLTCGMVGAGCTALLVAVV) threads the bilayer. The tract at residues 763–839 (DTQLTKRLKN…ITDMAKTQNT (77 aa)) is calmodulin-binding.

This sequence belongs to the potassium channel KCNN family. SK subfamily. Heterooligomer. The complex is composed of 4 channel subunits each of which binds to a calmodulin subunit which regulates the channel activity through calcium-binding.

Its subcellular location is the membrane. Functionally, forms a voltage-independent potassium channel activated by intracellular calcium. Activation is followed by membrane hyperpolarization. Thought to regulate neuronal excitability by contributing to the slow component of synaptic afterhyperpolarization. The channel is blocked by apamin. The polypeptide is Small conductance calcium-activated potassium channel protein (Drosophila melanogaster (Fruit fly)).